We begin with the raw amino-acid sequence, 576 residues long: FACT complex subunit pob3 (576 aa).

Disordered stretches follow at residues Ala153–Ser172, Lys193–Glu213, and Met490–Lys576. Positions Lys193–Glu203 are enriched in basic and acidic residues. Residues Asn204–Glu213 show a composition bias toward acidic residues. Residues Glu496 to Ala505 are compositionally biased toward basic and acidic residues. 2 stretches are compositionally biased toward acidic residues: residues Asp506–Tyr528 and Glu542–Glu564.

This sequence belongs to the SSRP1 family. In terms of assembly, forms a stable heterodimer with spt16. The spt16-pob3 dimer weakly associates with multiple molecules of nhp6 to form the FACT complex.

The protein resides in the nucleus. It is found in the chromosome. In terms of biological role, component of the FACT complex, a general chromatin factor that acts to reorganize nucleosomes. The FACT complex is involved in multiple processes that require DNA as a template such as mRNA elongation, DNA replication and DNA repair. During transcription elongation the FACT complex acts as a histone chaperone that both destabilizes and restores nucleosomal structure. It facilitates the passage of RNA polymerase II and transcription by promoting the dissociation of one histone H2A-H2B dimer from the nucleosome, then subsequently promotes the reestablishment of the nucleosome following the passage of RNA polymerase II. In Aspergillus oryzae (strain ATCC 42149 / RIB 40) (Yellow koji mold), this protein is FACT complex subunit pob3 (pob3).